Reading from the N-terminus, the 445-residue chain is Protein PRRC1 (445 aa).

2 disordered regions span residues 1–71 (MMEE…PSAP) and 105–167 (PPVS…TGLL). A compositionally biased stretch (polar residues) spans 27 to 49 (MSSTPVPLAATSSFSSPNVSSME). Residues 59 to 71 (PQPPLPPVRPSAP) show a composition bias toward pro residues. Phosphoserine is present on residues serine 209 and serine 408.

The protein belongs to the PRRC1 family. Interacts with PRKAR1A; resulting in PKA activation. Ubiquitously expressed with higher expression in kidney, liver and placenta. Detected in embryonic kidney cells (HEK293 cells) (at protein level). As to expression, specifically expressed in liver.

Its subcellular location is the golgi apparatus. The protein localises to the cytoplasm. May act as a regulator of the protein kinase A (PKA) activity during embryonic development. The sequence is that of Protein PRRC1 (PRRC1) from Homo sapiens (Human).